Reading from the N-terminus, the 839-residue chain is Taste receptor type 1 member 2 (839 aa).

Residues 1–19 form the signal peptide; it reads MGPRAKTICSLFFLLWVLA. The Extracellular segment spans residues 20 to 566; the sequence is EPAENSDFYL…VFLEWHEAPT (547 aa). N84, N248, N292, N312, N368, N407, N428, N487, and N527 each carry an N-linked (GlcNAc...) asparagine glycan. A helical membrane pass occupies residues 567–587; that stretch reads IAVALLAALGFLSTLAILVIF. The Cytoplasmic portion of the chain corresponds to 588–602; that stretch reads WRHFQTPIVRSAGGP. A helical transmembrane segment spans residues 603 to 623; the sequence is MCFLMLTLLLVAYMVVPVYVG. The Extracellular segment spans residues 624-635; it reads PPKVSTCLCRQA. Residues 636 to 656 form a helical membrane-spanning segment; that stretch reads LFPLCFTICISCIAVRSFQIV. Residues 657–681 are Cytoplasmic-facing; that stretch reads CAFKMASRFPRAYSYWVRYQGPYVS. Residues 682–702 traverse the membrane as a helical segment; the sequence is MAFITVLKMVIVVIGMLATGL. Over 703 to 727 the chain is Extracellular; that stretch reads SPTTRTDPDDPKITIVSCNPNYRNS. The helical transmembrane segment at 728-748 threads the bilayer; that stretch reads LLFNTSLDLLLSVVGFSFAYM. Topologically, residues 749–760 are cytoplasmic; it reads GKELPTNYNEAK. The chain crosses the membrane as a helical span at residues 761 to 781; the sequence is FITLSMTFYFTSSVSLCTFMS. Over 782–784 the chain is Extracellular; that stretch reads AYS. Residues 785-805 traverse the membrane as a helical segment; that stretch reads GVLVTIVDLLVTVLNLLAISL. The Cytoplasmic portion of the chain corresponds to 806 to 839; the sequence is GYFGPKCYMILFYPERNTSAYFNSMIQGYTMRRD.

Belongs to the G-protein coupled receptor 3 family. TAS1R subfamily. As to quaternary structure, forms heterodimers with TAS1R3.

It is found in the cell membrane. Functionally, putative taste receptor. TAS1R2/TAS1R3 recognizes diverse natural and synthetic sweeteners. This is Taste receptor type 1 member 2 (TAS1R2) from Pan troglodytes (Chimpanzee).